We begin with the raw amino-acid sequence, 436 residues long: GTPase Der (436 aa).

EngA-type G domains are found at residues 4–167 and 175–351; these read PTVA…PVEE and IRFS…ESQN. GTP-binding positions include 10–17, 57–61, 119–122, 181–188, 229–233, and 294–297; these read GRPNVGKS, DTGGI, NKVD, DTAGM, and NKWD. Residues 352–436 form the KH-like domain; the sequence is KRIPSAVLND…PIHLIARKRK (85 aa).

It belongs to the TRAFAC class TrmE-Era-EngA-EngB-Septin-like GTPase superfamily. EngA (Der) GTPase family. Associates with the 50S ribosomal subunit.

Its function is as follows. GTPase that plays an essential role in the late steps of ribosome biogenesis. The sequence is that of GTPase Der from Streptococcus pyogenes serotype M1.